Reading from the N-terminus, the 300-residue chain is ADP-ribosyl cyclase/cyclic ADP-ribose hydrolase 1 (300 aa).

Over 1-21 (MANCEFSPVSGDKPCCRLSRR) the chain is Cytoplasmic. The chain crosses the membrane as a helical; Signal-anchor for type II membrane protein span at residues 22–42 (AQLCLGVSILVLILVVVLAVV). The Extracellular segment spans residues 43 to 300 (VPRWRQQWSG…PEDSSCTSEI (258 aa)). 3 cysteine pairs are disulfide-bonded: Cys-67–Cys-82, Cys-99–Cys-180, and Cys-160–Cys-173. Asn-100 carries N-linked (GlcNAc...) asparagine glycosylation. Residue Cys-119 is part of the active site. Residue Asn-164 is glycosylated (N-linked (GlcNAc...) asparagine). The active site involves Cys-201. 2 N-linked (GlcNAc...) asparagine glycosylation sites follow: Asn-209 and Asn-219. Cystine bridges form between Cys-254–Cys-275 and Cys-287–Cys-296.

The protein belongs to the ADP-ribosyl cyclase family. In terms of assembly, homodimer. In terms of tissue distribution, expressed at high levels in pancreas, liver, kidney, brain, testis, ovary, placenta, malignant lymphoma and neuroblastoma.

The protein localises to the cell surface. The protein resides in the membrane. It catalyses the reaction 2'-phospho-cyclic ADP-ribose + nicotinate = nicotinate-adenine dinucleotide phosphate. The enzyme catalyses NAD(+) = cyclic ADP-beta-D-ribose + nicotinamide + H(+). It carries out the reaction NAD(+) + H2O = ADP-D-ribose + nicotinamide + H(+). The catalysed reaction is cyclic ADP-beta-D-ribose + H2O = ADP-D-ribose. It catalyses the reaction NADP(+) = 2'-phospho-cyclic ADP-ribose + nicotinamide. The enzyme catalyses nicotinate + NADP(+) = nicotinate-adenine dinucleotide phosphate + nicotinamide. With respect to regulation, ATP inhibits the cADPR hydrolyzing activity. Functionally, synthesizes cyclic ADP-ribose (cADPR), a second messenger for glucose-induced insulin secretion. Synthesizes the Ca(2+) mobilizer nicotinate-adenine dinucleotide phosphate, NAADP(+), from 2'-phospho-cADPR and nicotinic acid, as well as from NADP(+) and nicotinic acid. At both pH 5.0 and pH 7.4 preferentially transforms 2'-phospho-cADPR into NAADP(+), while preferentially cleaving NADP(+) to cADPR and ADPRP rather than into NADDP(+). Has cADPR hydrolase activity. This is ADP-ribosyl cyclase/cyclic ADP-ribose hydrolase 1 (CD38) from Homo sapiens (Human).